Consider the following 210-residue polypeptide: CKLF-like MARVEL transmembrane domain-containing protein 2B (210 aa).

Helical transmembrane passes span 35–55 (FWAQ…IAAM), 65–85 (PIVI…FFLY), 103–123 (LMND…ALEA), and 127–147 (LPVP…ISII). An MARVEL domain is found at 35 to 157 (FWAQGHAECK…DLCLQRRQFK (123 aa)).

The protein belongs to the chemokine-like factor family.

It is found in the membrane. The chain is CKLF-like MARVEL transmembrane domain-containing protein 2B (Cmtm2b) from Mus musculus (Mouse).